The sequence spans 601 residues: Cdc42-interacting protein 4 (601 aa).

Positions Met1–Phe117 are required for podosome formation and interaction with AKAP9 and microtubules. The required for translocation to the plasma membrane in response to insulin stretch occupies residues Met1–Phe117. An F-BAR domain is found at Met1–Asp264. A coiled-coil region spans residues Phe67–Val259. Disordered stretches follow at residues Gly280–Pro358, Asp390–Gln420, and Arg479–Gly543. Positions Gln289 to Thr302 are enriched in polar residues. Residues Arg293–Glu537 are interaction with CDC42. Residues Arg293 to Asn601 are interaction with PDE6G. Ser296, Ser298, and Ser299 each carry phosphoserine. Residues Gly314–Pro329 are compositionally biased toward basic residues. Phosphoserine is present on Ser335. Positions Pro336–Pro346 are enriched in low complexity. A Phosphoserine modification is found at Ser351. Residues Thr388–Asp481 are a coiled coil. Residues His393–Glu470 form the REM-1 domain. Basic and acidic residues predominate over residues Leu407–Gln420. Positions Ala471 to Asn601 are required for interaction with FASLG and localization to lysosomes. Ser482 is modified (phosphoserine). The interval Ala487–Pro541 is interaction with DNM2 and WASL. The span at Pro497–Ser506 shows a compositional bias: low complexity. Acidic residues predominate over residues Glu529–Pro538. Residues Glu529 to Asn601 are interaction with DNM1 and WASL. The segment at Pro538 to Asn601 is required for podosome formation. Residues Ser540–Asn601 form the SH3 domain. Residues His544–Asn601 are interaction with WAS. The segment at Val546–Asn601 is interaction with ARHGAP17, DAAM1, DIAPH1 and DIAPH2.

This sequence belongs to the FNBP1 family. In terms of assembly, interacts specifically with GTP-bound RHOQ. Interacts with DNM2 and PDE6G. Homodimerizes, the dimers can polymerize end-to-end to form filamentous structures. Interacts specifically with GTP-bound CDC42. Interacts with AKAP9, ARHGAP17, DAAM1, DIAPH1, DIAPH2, DNM1, FASLG/FASL, GAPVD1, LYN, microtubules, SRC, WAS/WASP and WASL/N-WASP. Interacts with the ligand binding domain of the thyroid receptor (TR) in the presence of thyroid hormone. May interact with CTNNB1 and HD/HTT. In terms of processing, tyrosine phosphorylated. Also phosphorylated by PKA. In terms of tissue distribution, expressed in brain, colon, heart, kidney, liver, lung, megakaryocyte, ovary, pancreas, peripheral blood lymphocytes, placenta, prostate, skeletal muscle, small intestine, spleen, testis, thymus and trachea.

It is found in the cytoplasm. It localises to the cytoskeleton. Its subcellular location is the cell cortex. The protein localises to the lysosome. The protein resides in the golgi apparatus. It is found in the cell membrane. It localises to the cell projection. Its subcellular location is the phagocytic cup. The protein localises to the perinuclear region. Required for translocation of GLUT4 to the plasma membrane in response to insulin signaling. Required to coordinate membrane tubulation with reorganization of the actin cytoskeleton during endocytosis. Binds to lipids such as phosphatidylinositol 4,5-bisphosphate and phosphatidylserine and promotes membrane invagination and the formation of tubules. Also promotes CDC42-induced actin polymerization by recruiting WASL/N-WASP which in turn activates the Arp2/3 complex. Actin polymerization may promote the fission of membrane tubules to form endocytic vesicles. Required for the formation of podosomes, actin-rich adhesion structures specific to monocyte-derived cells. May be required for the lysosomal retention of FASLG/FASL. This chain is Cdc42-interacting protein 4 (TRIP10), found in Homo sapiens (Human).